The chain runs to 438 residues: Putative F-box/FBD/LRR-repeat protein At2g05300 (438 aa).

Positions 13–59 (EDRISQLPDPLLTQILNLLPTEEAVKTSVLSTRWRTLWLWVPNLELS) constitute an F-box domain. LRR repeat units lie at residues 135–166 (CDSL…RLKD), 167–192 (IVFH…KIDV), 235–261 (CLII…DISL), and 318–346 (YVTL…ILER). In terms of domain architecture, FBD spans 362–409 (SMSSVPECLLTSLEFVEFKAPICGLGPEMMLVWYFLKNSPTLKKLTLP).

The protein is Putative F-box/FBD/LRR-repeat protein At2g05300 of Arabidopsis thaliana (Mouse-ear cress).